Here is a 703-residue protein sequence, read N- to C-terminus: Fibulin-1 (703 aa).

The N-terminal stretch at 1–29 (MERAAPSRRVPLPLLLLGGLALLAAGVDA) is a signal peptide. 35 disulfide bridges follow: Cys36-Cys61, Cys37-Cys68, Cys50-Cys69, Cys78-Cys109, Cys91-Cys110, Cys112-Cys136, Cys113-Cys143, Cys126-Cys144, Cys180-Cys190, Cys186-Cys199, Cys201-Cys214, Cys220-Cys233, Cys227-Cys242, Cys248-Cys260, Cys266-Cys279, Cys273-Cys288, Cys294-Cys306, Cys312-Cys325, Cys319-Cys334, Cys341-Cys354, Cys360-Cys373, Cys367-Cys382, Cys384-Cys397, Cys403-Cys415, Cys411-Cys424, Cys426-Cys439, Cys445-Cys454, Cys450-Cys463, Cys465-Cys479, Cys485-Cys498, Cys494-Cys507, Cys509-Cys523, Cys529-Cys542, Cys536-Cys551, and Cys556-Cys577. Anaphylatoxin-like domains are found at residues 36-76 (CCAD…LEEL), 77-111 (HCAT…RCCH), and 112-144 (CCLL…QACC). The N-linked (GlcNAc...) (complex) asparagine glycan is linked to Asn98. The EGF-like 1 domain occupies 176–215 (LNDRCRGGGPCKQQCRDTGDEVVCSCFVGYQLLSDGVSCE). Residues 216–261 (DVNECITGSHSCRLGESCINTVGSFRCQRDSSCGTGYELTEDNSCK) form the EGF-like 2; calcium-binding domain. The EGF-like 3; calcium-binding domain maps to 262 to 307 (DIDECESGIHNCLPDFICQNTLGSFRCRPKLQCKSGFIQDALGNCI). The 48-residue stretch at 308 to 355 (DINECLSISAPCPIGHTCINTEGSYTCQKNVPNCGRGYHLNEEGTRCV) folds into the EGF-like 4; calcium-binding domain. Residues 356–398 (DVDECAPPAEPCGKGHRCVNSPGSFRCECKTGYYFDGISRMCV) enclose the EGF-like 5; calcium-binding domain. A self-association and FN1-binding; calcium is necessary for homotypic binding, but not for heterotypic binding region spans residues 356-440 (DVDECAPPAE…RLSVDGRSCE (85 aa)). One can recognise an EGF-like 6; calcium-binding domain in the interval 399 to 440 (DVNECQRYPGRLCGHKCENTLGSYLCSCSVGFRLSVDGRSCE). Positions 441 to 480 (DINECSSSPCSQECANVYGSYQCYCRRGYQLSDVDGVTCE) constitute an EGF-like 7; calcium-binding domain. The EGF-like 8; calcium-binding domain maps to 481–524 (DIDECALPTGGHICSYRCINIPGSFQCSCPSSGYRLAPNGRNCQ). Residues 525-578 (DIDECVTGIHNCSINETCFNIQGGFRCLAFECPENYRRSAATLQQEKTDTVRCI) enclose the EGF-like 9; calcium-binding domain. Residues Asn535 and Asn539 are each glycosylated (N-linked (GlcNAc...) asparagine).

This sequence belongs to the fibulin family. Homomultimerizes and interacts with various extracellular matrix components such as FN1, LAMA1, LAMA2, NID, ACAN, CSPG2 and type IV collagen. Also interacts with APP and FGB. Interacts with FBLN7. Interacts with CCN3. In terms of assembly, (Microbial infection) Interacts with human papillomavirus/HPV type 16, 18 and 31 proteins E6. Isoform A and isoform B are only expressed in placenta. Isoform C and isoform D are expressed in a variety of tissues and cultured cells.

The protein resides in the secreted. The protein localises to the extracellular space. It is found in the extracellular matrix. Functionally, incorporated into fibronectin-containing matrix fibers. May play a role in cell adhesion and migration along protein fibers within the extracellular matrix (ECM). Could be important for certain developmental processes and contribute to the supramolecular organization of ECM architecture, in particular to those of basement membranes. Has been implicated in a role in cellular transformation and tumor invasion, it appears to be a tumor suppressor. May play a role in haemostasis and thrombosis owing to its ability to bind fibrinogen and incorporate into clots. Could play a significant role in modulating the neurotrophic activities of APP, particularly soluble APP. This chain is Fibulin-1 (FBLN1), found in Homo sapiens (Human).